A 262-amino-acid chain; its full sequence is Nodulation protein J (262 aa).

An ABC transmembrane type-2 domain is found at 33–259 (ASLLGNLADP…FASIALFRRR (227 aa)). 7 helical membrane passes run 37-57 (GNLA…GLIV), 64-84 (SYIA…SATF), 102-122 (GILF…VWAA), 125-145 (SVLA…ASWT), 149-169 (CAIP…MVVI), 177-197 (YFVF…GAVF), and 236-256 (LHVG…IALF).

It belongs to the ABC-2 integral membrane protein family. Lipooligosaccharide exporter (TC 3.A.1.102) subfamily. The complex is composed of two ATP-binding proteins (NodI) and two transmembrane proteins (NodJ).

The protein resides in the cell inner membrane. In terms of biological role, part of the ABC transporter complex NodIJ involved in the export of the nodulation factors (Nod factors), the bacterial signal molecules that induce symbiosis and subsequent nodulation induction. Nod factors are LCO (lipo-chitin oligosaccharide), a modified beta-1,4-linked N-acetylglucosamine oligosaccharide. This subunit encodes the transporter. In Bradyrhizobium diazoefficiens (strain JCM 10833 / BCRC 13528 / IAM 13628 / NBRC 14792 / USDA 110), this protein is Nodulation protein J (nodJ).